The primary structure comprises 481 residues: Aspartyl/glutamyl-tRNA(Asn/Gln) amidotransferase subunit B (481 aa).

This sequence belongs to the GatB/GatE family. GatB subfamily. In terms of assembly, heterotrimer of A, B and C subunits.

The catalysed reaction is L-glutamyl-tRNA(Gln) + L-glutamine + ATP + H2O = L-glutaminyl-tRNA(Gln) + L-glutamate + ADP + phosphate + H(+). It carries out the reaction L-aspartyl-tRNA(Asn) + L-glutamine + ATP + H2O = L-asparaginyl-tRNA(Asn) + L-glutamate + ADP + phosphate + 2 H(+). Functionally, allows the formation of correctly charged Asn-tRNA(Asn) or Gln-tRNA(Gln) through the transamidation of misacylated Asp-tRNA(Asn) or Glu-tRNA(Gln) in organisms which lack either or both of asparaginyl-tRNA or glutaminyl-tRNA synthetases. The reaction takes place in the presence of glutamine and ATP through an activated phospho-Asp-tRNA(Asn) or phospho-Glu-tRNA(Gln). This is Aspartyl/glutamyl-tRNA(Asn/Gln) amidotransferase subunit B from Teredinibacter turnerae (strain ATCC 39867 / T7901).